We begin with the raw amino-acid sequence, 157 residues long: 2-C-methyl-D-erythritol 2,4-cyclodiphosphate synthase (157 aa).

Asp8, His10, and His42 together coordinate a divalent metal cation. 8–10 (DVH) contacts 4-CDP-2-C-methyl-D-erythritol 2-phosphate. Residues 56-58 (DIG), 132-135 (STSE), Phe139, and Arg142 each bind 4-CDP-2-C-methyl-D-erythritol 2-phosphate.

The protein belongs to the IspF family. As to quaternary structure, homotrimer. Requires a divalent metal cation as cofactor.

The enzyme catalyses 4-CDP-2-C-methyl-D-erythritol 2-phosphate = 2-C-methyl-D-erythritol 2,4-cyclic diphosphate + CMP. It participates in isoprenoid biosynthesis; isopentenyl diphosphate biosynthesis via DXP pathway; isopentenyl diphosphate from 1-deoxy-D-xylulose 5-phosphate: step 4/6. In terms of biological role, involved in the biosynthesis of isopentenyl diphosphate (IPP) and dimethylallyl diphosphate (DMAPP), two major building blocks of isoprenoid compounds. Catalyzes the conversion of 4-diphosphocytidyl-2-C-methyl-D-erythritol 2-phosphate (CDP-ME2P) to 2-C-methyl-D-erythritol 2,4-cyclodiphosphate (ME-CPP) with a corresponding release of cytidine 5-monophosphate (CMP). The chain is 2-C-methyl-D-erythritol 2,4-cyclodiphosphate synthase from Dehalococcoides mccartyi (strain ATCC BAA-2266 / KCTC 15142 / 195) (Dehalococcoides ethenogenes (strain 195)).